The sequence spans 896 residues: Alanine--tRNA ligase (896 aa).

His574, His578, Cys677, and His681 together coordinate Zn(2+).

This sequence belongs to the class-II aminoacyl-tRNA synthetase family. The cofactor is Zn(2+).

Its subcellular location is the cytoplasm. It catalyses the reaction tRNA(Ala) + L-alanine + ATP = L-alanyl-tRNA(Ala) + AMP + diphosphate. Catalyzes the attachment of alanine to tRNA(Ala) in a two-step reaction: alanine is first activated by ATP to form Ala-AMP and then transferred to the acceptor end of tRNA(Ala). Also edits incorrectly charged Ser-tRNA(Ala) and Gly-tRNA(Ala) via its editing domain. This chain is Alanine--tRNA ligase, found in Mycoplasma capricolum subsp. capricolum (strain California kid / ATCC 27343 / NCTC 10154).